The sequence spans 301 residues: tRNA pseudouridine synthase B (301 aa).

Aspartate 38 functions as the Nucleophile in the catalytic mechanism.

Belongs to the pseudouridine synthase TruB family. Type 1 subfamily.

The catalysed reaction is uridine(55) in tRNA = pseudouridine(55) in tRNA. Its function is as follows. Responsible for synthesis of pseudouridine from uracil-55 in the psi GC loop of transfer RNAs. The sequence is that of tRNA pseudouridine synthase B from Clostridioides difficile (strain 630) (Peptoclostridium difficile).